Consider the following 1277-residue polypeptide: Protein FAM83H (1277 aa).

The segment covering 1-12 (MARRSQSSSQGE) has biased composition (polar residues). 8 disordered regions span residues 1–20 (MARR…PNYL), 67–98 (SLQR…SGTY), 717–756 (FGST…TNPL), 772–805 (SKLE…TGRT), 971–1018 (EQTS…NSAF), 1070–1130 (KAEE…SRLS), 1158–1225 (QKNR…RDIL), and 1247–1266 (KKDE…AGKI). Residues 724 to 750 (SVEKAKENPPAEKEKEEGLLSRHDSFR) show a composition bias toward basic and acidic residues. 4 stretches are compositionally biased toward polar residues: residues 777-805 (HTST…TGRT), 971-982 (EQTSSTIQTIGN), 993-1015 (SGPT…TRPN), and 1112-1130 (KSLS…SRLS). Low complexity predominate over residues 1204-1215 (SFLSRSRFSRPS). Residues 1247–1263 (KKDEQPSHADDNDDKKA) are compositionally biased toward basic and acidic residues.

The protein belongs to the FAM83 family.

Its subcellular location is the cytoplasm. It is found in the cytoskeleton. Functionally, may play a role in keratin cytoskeleton disassembly. This chain is Protein FAM83H, found in Xenopus tropicalis (Western clawed frog).